The sequence spans 356 residues: Ferrochelatase (356 aa).

The Fe cation site is built by H214 and E295.

Belongs to the ferrochelatase family.

The protein localises to the cytoplasm. It catalyses the reaction heme b + 2 H(+) = protoporphyrin IX + Fe(2+). It participates in porphyrin-containing compound metabolism; protoheme biosynthesis; protoheme from protoporphyrin-IX: step 1/1. Its function is as follows. Catalyzes the ferrous insertion into protoporphyrin IX. The chain is Ferrochelatase from Paraburkholderia xenovorans (strain LB400).